Consider the following 442-residue polypeptide: MVQLPAMKRVKGRAPLSVVVAIIGGLALAGIIFTEDLRGLTEVKEKVTDKEKKRTSLRTVMRTSALLSADQPPPPAVLSVEPATATPPPAPKMAFNATRCSVTDGYWAYDRSKKLPYTDQTCPYVDRQDSCQRNGRPDSDYLYWDWHLDDCLLPRFDPVSMLEKLRGKRIMFVGDSLQLGQWLSFVCLVNSAVPDTPGAKSMERSRTLSVYTVKEYNASIEFYWAPFLVESNSDRNIALGAGGRVLHVDAIEEHGKHWRRADILVFDSYVWWMTGYRIKSVWGSFGDDGYEELDAWVAYRLGLKTWANWVDSNVDPATTRVFFMSISTTHMRSEDWGREGGIRCYNETWPITQRGYRGSGSDRRMMEVMSDVLGRMRTPVTLLNITQLTEHRVDAHVSVYTETGGLLVTDEEKTDPQRYTDCIHWCIPGVPDTWNRLLYAHL.

The Cytoplasmic portion of the chain corresponds to 1-13; it reads MVQLPAMKRVKGR. Residues 14-34 form a helical; Signal-anchor for type II membrane protein membrane-spanning segment; it reads APLSVVVAIIGGLALAGIIFT. The Lumenal portion of the chain corresponds to 35-442; the sequence is EDLRGLTEVK…TWNRLLYAHL (408 aa). Residue asparagine 96 is glycosylated (N-linked (GlcNAc...) asparagine). 4 disulfide bridges follow: cysteine 100/cysteine 151, cysteine 122/cysteine 187, cysteine 131/cysteine 426, and cysteine 344/cysteine 422. A GDS motif motif is present at residues 174-176; the sequence is GDS. Catalysis depends on serine 176, which acts as the Nucleophile. Residues asparagine 217, asparagine 346, and asparagine 384 are each glycosylated (N-linked (GlcNAc...) asparagine). The active-site Proton donor is the aspartate 421. The short motif at 421-424 is the DXXH motif element; sequence DCIH. The active-site Proton acceptor is histidine 424.

The protein belongs to the PC-esterase family. TBL subfamily.

Its subcellular location is the golgi apparatus membrane. Functionally, probable xylan acetyltransferase required for 2-O- and 3-O-monoacetylation of xylosyl residues in xylan. Possesses extremely low activity in vitro. In Oryza sativa subsp. japonica (Rice), this protein is Probable xylan O-acetyltransferase 8.